Consider the following 161-residue polypeptide: ATP synthase subunit b (161 aa).

The helical transmembrane segment at 10-29 (AVVQLLNFLFLLWILNKLLY) threads the bilayer.

The protein belongs to the ATPase B chain family. As to quaternary structure, F-type ATPases have 2 components, F(1) - the catalytic core - and F(0) - the membrane proton channel. F(1) has five subunits: alpha(3), beta(3), gamma(1), delta(1), epsilon(1). F(0) has three main subunits: a(1), b(2) and c(10-14). The alpha and beta chains form an alternating ring which encloses part of the gamma chain. F(1) is attached to F(0) by a central stalk formed by the gamma and epsilon chains, while a peripheral stalk is formed by the delta and b chains.

The protein localises to the cell inner membrane. Functionally, f(1)F(0) ATP synthase produces ATP from ADP in the presence of a proton or sodium gradient. F-type ATPases consist of two structural domains, F(1) containing the extramembraneous catalytic core and F(0) containing the membrane proton channel, linked together by a central stalk and a peripheral stalk. During catalysis, ATP synthesis in the catalytic domain of F(1) is coupled via a rotary mechanism of the central stalk subunits to proton translocation. Its function is as follows. Component of the F(0) channel, it forms part of the peripheral stalk, linking F(1) to F(0). The protein is ATP synthase subunit b of Fervidobacterium nodosum (strain ATCC 35602 / DSM 5306 / Rt17-B1).